Here is a 466-residue protein sequence, read N- to C-terminus: Ribosome biogenesis protein YTM1 (466 aa).

Residues 8-95 (IKINFFTNEE…EASLNLEYTR (88 aa)) are ubiquitin-like (UBL) domain. The interval 105-466 (SFNNDDWISS…QINKGSDITK (362 aa)) is sufficient for interaction with ERB1 and association with 66S pre-ribosomes. 7 WD repeats span residues 120 to 159 (PLSA…EKQY), 161 to 199 (GHSG…NIED), 214 to 253 (GHKA…MTTI), 291 to 331 (GHSQ…CVDT), 333 to 372 (TTGY…TTTE), 381 to 421 (GHTN…SLYT), and 431 to 466 (KGQD…DITK).

This sequence belongs to the WD repeat WDR12/YTM1 family. In terms of assembly, component of the NOP7 complex, composed of ERB1, NOP7 and YTM1. The complex is held together by ERB1, which interacts with NOP7 via its N-terminal domain and with YTM1 via a high-affinity interaction between the seven-bladed beta-propeller domains of the 2 proteins. The NOP7 complex associates with the 66S pre-ribosome. Interacts (via UBL domain) with MDN1 (via VWFA/MIDAS domain).

It is found in the nucleus. The protein localises to the nucleolus. The protein resides in the nucleoplasm. In terms of biological role, component of the NOP7 complex, which is required for maturation of the 25S and 5.8S ribosomal RNAs and formation of the 60S ribosome. The sequence is that of Ribosome biogenesis protein YTM1 from Debaryomyces hansenii (strain ATCC 36239 / CBS 767 / BCRC 21394 / JCM 1990 / NBRC 0083 / IGC 2968) (Yeast).